Here is a 165-residue protein sequence, read N- to C-terminus: MRAALFPGSFDPITWGHIDLVKRASLIFDKVIVLVANNSNKSYLLSDIERYELTFEVIMSLGWTKIFVDKYDGVILDYALKNNIGFIVRGVRAFHDFEFEFERYVVNNKLNSSIDTVFLPSSDKYLFVRSDLVKELIKNKNFNLSNFIPELVQKKLKSKFIDKLS.

Residue Ser-9 participates in substrate binding. ATP is bound by residues 9–10 and His-17; that span reads SF. Residues Lys-41, Ile-75, and Arg-89 each contribute to the substrate site. ATP contacts are provided by residues 90–92, Glu-100, and 125–131; these read GVR and YLFVRSD.

The protein belongs to the bacterial CoaD family. In terms of assembly, homohexamer. Mg(2+) serves as cofactor.

The protein resides in the cytoplasm. The enzyme catalyses (R)-4'-phosphopantetheine + ATP + H(+) = 3'-dephospho-CoA + diphosphate. Its pathway is cofactor biosynthesis; coenzyme A biosynthesis; CoA from (R)-pantothenate: step 4/5. Its function is as follows. Reversibly transfers an adenylyl group from ATP to 4'-phosphopantetheine, yielding dephospho-CoA (dPCoA) and pyrophosphate. This chain is Phosphopantetheine adenylyltransferase, found in Borrelia duttonii (strain Ly).